Reading from the N-terminus, the 849-residue chain is Disks large homolog 3 (849 aa).

The disordered stretch occupies residues 32 to 101 (DWQVPDPYGP…GKNTPKLNGS (70 aa)). A compositionally biased stretch (gly residues) spans 41–53 (PSGGNGASSGYGG). Polar residues predominate over residues 57-69 (QTLPSQAGATPTP). PDZ domains lie at 149 to 235 (EIVL…VRRR), 244 to 330 (EVNL…VAKP), and 404 to 484 (KIIL…AQYR). The residue at position 157 (Ser-157) is a Phosphoserine. One can recognise an SH3 domain in the interval 519–589 (KRSLYVRALF…PSKKRVEKKE (71 aa)). The 176-residue stretch at 659–834 (ARPVIILGPM…IYNKIKQIIE (176 aa)) folds into the Guanylate kinase-like domain. Tyr-705 is modified (phosphotyrosine).

This sequence belongs to the MAGUK family. In terms of assembly, interacts through its PDZ domains with NETO1 and APC. Interacts through its first two PDZ domains with ERBB4. Interacts through its third PDZ domain with NLGN1, and probably with NLGN2 and NLGN3. Interacts through its PDZ domains with GRIN2B and SYNGAP1. Interacts through its guanylate kinase-like domain with DLGAP1, DLGAP2, DLGAP3 and DLGAP4. Interacts with FRMPD4 (via C-terminus). Interacts with LRFN2. Interacts with LRFN1 and LRFN4. Interacts with FLTP. Interacts with DGKI (via PDZ-binding motif).

In terms of biological role, required for learning most likely through its role in synaptic plasticity following NMDA receptor signaling. The polypeptide is Disks large homolog 3 (Dlg3) (Rattus norvegicus (Rat)).